Consider the following 35-residue polypeptide: Mu/omega-theraphotoxin-Tap1a (35 aa).

3 disulfide bridges follow: C3–C18, C10–C23, and C17–C30.

The protein belongs to the neurotoxin 10 (Hwtx-1) family. 59 (Tltx) subfamily. Expressed by the venom gland.

It is found in the secreted. Its function is as follows. Gating-modifier toxin that inhibits both sodium (Nav) and calcium (Cav3) channels by inducing hyperpolarizing shift in voltage-dependence of activation and steady state inactivation. Inhibits Nav1.1/SCN1A, Nav1.2/SCN2A, Nav1.3/SCN3A, Nav1.6/SCN6A, Nav1.7/SCN9A and Cav3.1/CACNA1G sodium and calcium channels at nanomolar concentrations (IC(50)=81-301 nM). Surprisingly, selectively slows fast inactivation of Nav1.3/SCN3A. Also shows moderate inhibition of Cav3.2/CACNA1H calcium channels (IC(50)=1233 nM). Ex vivo, nearly ablates neuronal mechanosensitivity in afferent fibers innervating the colon and the bladder. In vivo, in a mouse model of irritable bowel syndrome, intracolonic administration of the toxin reverses colonic mechanical hypersensitivity. In Theraphosa apophysis (Goliath pinkfoot tarantula), this protein is Mu/omega-theraphotoxin-Tap1a.